We begin with the raw amino-acid sequence, 141 residues long: Large ribosomal subunit protein uL11 (141 aa).

Belongs to the universal ribosomal protein uL11 family. Part of the ribosomal stalk of the 50S ribosomal subunit. Interacts with L10 and the large rRNA to form the base of the stalk. L10 forms an elongated spine to which L12 dimers bind in a sequential fashion forming a multimeric L10(L12)X complex. One or more lysine residues are methylated.

Its function is as follows. Forms part of the ribosomal stalk which helps the ribosome interact with GTP-bound translation factors. The sequence is that of Large ribosomal subunit protein uL11 from Lacticaseibacillus casei (strain BL23) (Lactobacillus casei).